The primary structure comprises 155 residues: V-type proton ATPase 16 kDa proteolipid subunit c (155 aa).

Over 1–10 the chain is Lumenal; it reads MSEAKSGPEY. Residues 11–33 traverse the membrane as a helical segment; sequence ASFFAVMGASAAMVFSALGAAYG. Topologically, residues 34–55 are cytoplasmic; that stretch reads TAKSGTGIAAMSVMRPEMIMKS. Residues 56–76 traverse the membrane as a helical segment; it reads IIPVVMAGIIAIYGLVVAVLI. Residues 77-92 lie on the Lumenal side of the membrane; the sequence is ANSLNDGISLYRSFLQ. Residues 93 to 114 traverse the membrane as a helical segment; that stretch reads LGAGLSVGLSGLAAGFAIGIVG. Over 115–131 the chain is Cytoplasmic; that stretch reads DAGVRGTAQQPRLFVGM. Residues 132–152 form a helical membrane-spanning segment; sequence ILILIFAEVLGLYGLIVALIL. Over 153–155 the chain is Lumenal; sequence STK.

This sequence belongs to the V-ATPase proteolipid subunit family. In terms of assembly, V-ATPase is a heteromultimeric enzyme made up of two complexes: the ATP-hydrolytic V1 complex and the proton translocation V0 complex. The V1 complex consists of three catalytic AB heterodimers that form a heterohexamer, three peripheral stalks each consisting of EG heterodimers, one central rotor including subunits D and F, and the regulatory subunits C and H. The proton translocation complex V0 consists of the proton transport subunit a, a ring of proteolipid subunits c9c'', rotary subunit d, subunits e and f, and the accessory subunits ATP6AP1/Ac45 and ATP6AP2/PRR. Interacts with the V0 complex V-ATPase subunit a4 ATP6V0A4. Interacts with LASS2. Interacts with RNF182; this interaction leads to ubiquitination and degradation via the proteasome pathway. Ubiquitinated by RNF182, leading to its degradation via the ubiquitin-proteasome pathway.

It localises to the cytoplasmic vesicle. The protein localises to the clathrin-coated vesicle membrane. Its subcellular location is the secretory vesicle. It is found in the synaptic vesicle membrane. Functionally, proton-conducting pore forming subunit of the V0 complex of vacuolar(H+)-ATPase (V-ATPase), a multisubunit enzyme composed of a peripheral complex (V1) that hydrolyzes ATP and a membrane integral complex (V0) that translocates protons. V-ATPase is responsible for acidifying and maintaining the pH of intracellular compartments and in some cell types, is targeted to the plasma membrane, where it is responsible for acidifying the extracellular environment. In Ovis aries (Sheep), this protein is V-type proton ATPase 16 kDa proteolipid subunit c (ATP6V0C).